The chain runs to 79 residues: uncharacterized protein (79 aa).

It is found in the mitochondrion. This is an uncharacterized protein from Marchantia polymorpha (Common liverwort).